The chain runs to 124 residues: Small ribosomal subunit protein uS12 (124 aa).

Aspartate 89 carries the 3-methylthioaspartic acid modification.

Belongs to the universal ribosomal protein uS12 family. Part of the 30S ribosomal subunit. Contacts proteins S8 and S17. May interact with IF1 in the 30S initiation complex.

With S4 and S5 plays an important role in translational accuracy. Its function is as follows. Interacts with and stabilizes bases of the 16S rRNA that are involved in tRNA selection in the A site and with the mRNA backbone. Located at the interface of the 30S and 50S subunits, it traverses the body of the 30S subunit contacting proteins on the other side and probably holding the rRNA structure together. The combined cluster of proteins S8, S12 and S17 appears to hold together the shoulder and platform of the 30S subunit. This chain is Small ribosomal subunit protein uS12, found in Sodalis glossinidius (strain morsitans).